A 166-amino-acid polypeptide reads, in one-letter code: Lipoprotein signal peptidase (166 aa).

The next 4 helical transmembrane spans lie at 9–29, 45–65, 71–91, and 100–120; these read ASGALAPWLGISLIVILFDQL, ALTSFFSLVLVYNRGAAFGFL, WQRWAFTALGIGATLVICFLL, and FSLSLALILGGALGNVIDRLV. Residues Asp126 and Asp144 contribute to the active site. Residues 135 to 155 traverse the membrane as a helical segment; that stretch reads WHFPAFNLADSAITVGAVLLV.

It belongs to the peptidase A8 family.

The protein localises to the cell inner membrane. The enzyme catalyses Release of signal peptides from bacterial membrane prolipoproteins. Hydrolyzes -Xaa-Yaa-Zaa-|-(S,diacylglyceryl)Cys-, in which Xaa is hydrophobic (preferably Leu), and Yaa (Ala or Ser) and Zaa (Gly or Ala) have small, neutral side chains.. It participates in protein modification; lipoprotein biosynthesis (signal peptide cleavage). In terms of biological role, this protein specifically catalyzes the removal of signal peptides from prolipoproteins. This is Lipoprotein signal peptidase from Burkholderia ambifaria (strain MC40-6).